Here is a 458-residue protein sequence, read N- to C-terminus: Argininosuccinate lyase (458 aa).

Belongs to the lyase 1 family. Argininosuccinate lyase subfamily.

Its subcellular location is the cytoplasm. It catalyses the reaction 2-(N(omega)-L-arginino)succinate = fumarate + L-arginine. It functions in the pathway amino-acid biosynthesis; L-arginine biosynthesis; L-arginine from L-ornithine and carbamoyl phosphate: step 3/3. The protein is Argininosuccinate lyase of Vibrio cholerae serotype O1 (strain ATCC 39541 / Classical Ogawa 395 / O395).